Consider the following 288-residue polypeptide: MILLALPNKGRISKPVNEILEKSGLKISVHGRSLFAQTVDPEIKVMFARAKDIPEFVRDGVADVGVTGYDLMLERDTEEELEMLLDFKFGNARLVIAAPENSSVNSIDDVKDGMKIATEFPGLTKRYLEKKGLNLEIIELSGATEIAPFIGVSDLICDLTSTGTTLQLNRLKEVENVVSSTTRLVANKKSMENPEKCVKINQVLSGIKSVLYAQSKRLIMMNAPKDKVSEITSIIPGMGGPTVSEILSNDKMLAINAVIDENKVFETVTNLERLGARDILVVPIERIL.

This sequence belongs to the ATP phosphoribosyltransferase family. Long subfamily. Mg(2+) is required as a cofactor.

The protein localises to the cytoplasm. It carries out the reaction 1-(5-phospho-beta-D-ribosyl)-ATP + diphosphate = 5-phospho-alpha-D-ribose 1-diphosphate + ATP. Its pathway is amino-acid biosynthesis; L-histidine biosynthesis; L-histidine from 5-phospho-alpha-D-ribose 1-diphosphate: step 1/9. Feedback inhibited by histidine. In terms of biological role, catalyzes the condensation of ATP and 5-phosphoribose 1-diphosphate to form N'-(5'-phosphoribosyl)-ATP (PR-ATP). Has a crucial role in the pathway because the rate of histidine biosynthesis seems to be controlled primarily by regulation of HisG enzymatic activity. The polypeptide is ATP phosphoribosyltransferase (Methanococcus maripaludis (strain C6 / ATCC BAA-1332)).